Reading from the N-terminus, the 107-residue chain is Bombesin (107 aa).

The N-terminal stretch at 1–26 is a signal peptide; sequence MSAIPLNRILPLGFLLIFSFISLSSC. Positions 27 to 41 are excised as a propeptide; sequence MEFVEDPNNQGGLNL. Position 42 is a pyrrolidone carboxylic acid (Gln42). At Met55 the chain carries Methionine amide. Residues 56–107 constitute a propeptide that is removed on maturation; the sequence is GKKSLQDTDFEEMESFAKRNVENMKAESERELRHAQLVVRNILEQYLKNMQN.

Expressed by the skin glands.

Its subcellular location is the secreted. In terms of biological role, stimulates smooth muscle contraction. Role in induction of hypothermia, stimulation of DNA replication and release of many gastrointestinal hormones. Possesses insulin-releasing activity. This chain is Bombesin, found in Bombina variegata (Yellow-bellied toad).